Consider the following 344-residue polypeptide: L-sulfolactate dehydrogenase (344 aa).

It belongs to the LDH2/MDH2 oxidoreductase family.

The protein resides in the cytoplasm. The catalysed reaction is a (2S)-2-hydroxycarboxylate + NAD(+) = a 2-oxocarboxylate + NADH + H(+). It functions in the pathway cofactor biosynthesis; coenzyme M biosynthesis; sulfoacetaldehyde from phosphoenolpyruvate and sulfite: step 3/4. The protein operates within cofactor biosynthesis; 5,6,7,8-tetrahydromethanopterin biosynthesis. Catalyzes the reduction of sulfopyruvate to (R)-sulfolactate much more efficiently than the reverse reaction. Also catalyzes the reduction of oxaloacetate, alpha-ketoglutarate, and to a much lower extent, KHTCA, but not pyruvate. Involved in the biosynthesis of both coenzyme M (with (R)-sulfolactate) and methanopterin (with alpha-ketoglutarate). The polypeptide is L-sulfolactate dehydrogenase (comC) (Methanocaldococcus jannaschii (strain ATCC 43067 / DSM 2661 / JAL-1 / JCM 10045 / NBRC 100440) (Methanococcus jannaschii)).